Consider the following 1280-residue polypeptide: Fibronectin type III domain-containing protein (1280 aa).

Residues 1 to 19 (MWQILLAISIFSLSKLSNA) form the signal peptide. Residues 20–1156 (QQQPKVAPPQ…RVSTPIYQSA (1137 aa)) lie on the Extracellular side of the membrane. 5 disulfides stabilise this stretch: Cys58–Cys111, Cys268–Cys321, Cys369–Cys417, Cys460–Cys511, and Cys553–Cys604. Fibronectin type-III domains lie at 628–722 (PFPP…TGSF), 730–824 (PEKW…VKQF), 830–933 (PTGK…VAAD), 939–1033 (PGPP…TEKT), and 1039–1131 (PAKP…PASD). Polar residues predominate over residues 1118-1130 (YPSQENPQESPAS). Positions 1118–1144 (YPSQENPQESPASDITEARPRPGISNV) are disordered. A helical transmembrane segment spans residues 1157-1177 (WFIALLVLIALLLLVLLTFVL). Topologically, residues 1178-1280 (YTRHQGAKYL…KDPSSLATFV (103 aa)) are cytoplasmic. A disordered region spans residues 1206-1280 (DEEEGSFSNN…KDPSSLATFV (75 aa)). Basic and acidic residues predominate over residues 1262–1273 (DEKKAPPEEKDP).

As to expression, component of the acid-insoluble organic matrix of the aragonitic skeleton (at protein level).

It localises to the membrane. The polypeptide is Fibronectin type III domain-containing protein (Acropora millepora (Staghorn coral)).